Reading from the N-terminus, the 80-residue chain is Trefoil factor 3 (80 aa).

The signal sequence occupies residues 1–21 (MAARALCMLGLVLALLSSSSA). A P-type domain is found at 30-73 (NQCAVPAKDRVDCGYPHVTPKECNNRGCCFDSRIPGVPWCFKPL). Disulfide bonds link Cys32-Cys58, Cys42-Cys57, and Cys52-Cys69.

As to quaternary structure, monomer. Homodimer; disulfide-linked. Expressed in goblet cells of the intestines and colon (at protein level). Expressed by goblet cells of small and large intestinal epithelia and also by the uterus. Also expressed in the hypothalamus where it is detected in paraventricular, periventricular and supraoptic nuclei (at protein level).

It localises to the secreted. The protein localises to the extracellular space. The protein resides in the extracellular matrix. Its subcellular location is the cytoplasm. Involved in the maintenance and repair of the intestinal mucosa. Promotes the mobility of epithelial cells in healing processes (motogen). The polypeptide is Trefoil factor 3 (TFF3) (Homo sapiens (Human)).